The chain runs to 216 residues: DNA gyrase subunit B (216 aa).

A Toprim domain is found at 140–216 (SELYLVEGDS…PDKLRYHKII (77 aa)).

This sequence belongs to the type II topoisomerase GyrB family. In terms of assembly, heterotetramer, composed of two GyrA and two GyrB chains. In the heterotetramer, GyrA contains the active site tyrosine that forms a transient covalent intermediate with DNA, while GyrB binds cofactors and catalyzes ATP hydrolysis.

Its subcellular location is the cytoplasm. It carries out the reaction ATP-dependent breakage, passage and rejoining of double-stranded DNA.. In terms of biological role, a type II topoisomerase that negatively supercoils closed circular double-stranded (ds) DNA in an ATP-dependent manner to modulate DNA topology and maintain chromosomes in an underwound state. Negative supercoiling favors strand separation, and DNA replication, transcription, recombination and repair, all of which involve strand separation. Also able to catalyze the interconversion of other topological isomers of dsDNA rings, including catenanes and knotted rings. Type II topoisomerases break and join 2 DNA strands simultaneously in an ATP-dependent manner. In Acinetobacter venetianus (strain ATCC 31012 / DSM 23050 / BCRC 14357 / CCUG 45561 / CIP 110063 / KCTC 2702 / LMG 19082 / RAG-1), this protein is DNA gyrase subunit B (gyrB).